A 355-amino-acid chain; its full sequence is Chorismate synthase (355 aa).

Arginine 48 lines the NADP(+) pocket. Residues 125–127 (RSS), 238–239 (NA), glycine 278, 293–297 (KPASS), and arginine 319 contribute to the FMN site.

This sequence belongs to the chorismate synthase family. As to quaternary structure, homotetramer. FMNH2 is required as a cofactor.

It catalyses the reaction 5-O-(1-carboxyvinyl)-3-phosphoshikimate = chorismate + phosphate. It functions in the pathway metabolic intermediate biosynthesis; chorismate biosynthesis; chorismate from D-erythrose 4-phosphate and phosphoenolpyruvate: step 7/7. Catalyzes the anti-1,4-elimination of the C-3 phosphate and the C-6 proR hydrogen from 5-enolpyruvylshikimate-3-phosphate (EPSP) to yield chorismate, which is the branch point compound that serves as the starting substrate for the three terminal pathways of aromatic amino acid biosynthesis. This reaction introduces a second double bond into the aromatic ring system. The protein is Chorismate synthase of Baumannia cicadellinicola subsp. Homalodisca coagulata.